We begin with the raw amino-acid sequence, 468 residues long: Anthocyanidin 3-O-glucoside 2'''-O-xylosyltransferase (468 aa).

UDP-alpha-D-xylose contacts are provided by residues Ser-284, 344–346 (IQQ), 361–369 (HCGFGSMWE), and 383–386 (HGEQ).

The protein belongs to the UDP-glycosyltransferase family.

The enzyme catalyses an anthocyanidin 3-O-beta-D-glucoside + UDP-alpha-D-xylose = an anthocyanidin 3-O-beta-D-sambubioside + UDP + 2 H(+). The protein operates within secondary metabolite biosynthesis; flavonoid biosynthesis. In terms of biological role, contributes to the last few anthocyanin biosynthetic steps. Converts cyanidin 3-O-glucoside to cyanidin 3-O-xylosyl(1-&gt;2)glucoside. Can use 3-O-glucosylated anthocyanidins/flavonols and uridine diphosphate (UDP)-xylose as substrates. The polypeptide is Anthocyanidin 3-O-glucoside 2'''-O-xylosyltransferase (A3G2XYLT) (Arabidopsis thaliana (Mouse-ear cress)).